Consider the following 257-residue polypeptide: Sulfur carrier protein FdhD (257 aa).

The Cysteine persulfide intermediate role is filled by Cys-105.

It belongs to the FdhD family.

The protein localises to the cytoplasm. In terms of biological role, required for formate dehydrogenase (FDH) activity. Acts as a sulfur carrier protein that transfers sulfur from IscS to the molybdenum cofactor prior to its insertion into FDH. The chain is Sulfur carrier protein FdhD from Saccharolobus solfataricus (strain ATCC 35092 / DSM 1617 / JCM 11322 / P2) (Sulfolobus solfataricus).